A 187-amino-acid chain; its full sequence is tRNA (cytidine(56)-2'-O)-methyltransferase (187 aa).

Residues Leu-94 and Gly-120–Val-124 each bind S-adenosyl-L-methionine.

It belongs to the aTrm56 family. As to quaternary structure, homodimer.

The protein localises to the cytoplasm. It catalyses the reaction cytidine(56) in tRNA + S-adenosyl-L-methionine = 2'-O-methylcytidine(56) in tRNA + S-adenosyl-L-homocysteine + H(+). Functionally, specifically catalyzes the AdoMet-dependent 2'-O-ribose methylation of cytidine at position 56 in tRNAs. The protein is tRNA (cytidine(56)-2'-O)-methyltransferase of Hyperthermus butylicus (strain DSM 5456 / JCM 9403 / PLM1-5).